Here is a 174-residue protein sequence, read N- to C-terminus: RNA pyrophosphohydrolase (174 aa).

The Nudix hydrolase domain maps to 6-149 (GYRPNVGIIL…KRDVYLEALK (144 aa)). A Nudix box motif is present at residues 38 to 59 (GGIKPGESPETAMYRELYEEVG).

Belongs to the Nudix hydrolase family. RppH subfamily. A divalent metal cation serves as cofactor.

Accelerates the degradation of transcripts by removing pyrophosphate from the 5'-end of triphosphorylated RNA, leading to a more labile monophosphorylated state that can stimulate subsequent ribonuclease cleavage. This is RNA pyrophosphohydrolase from Neisseria gonorrhoeae (strain ATCC 700825 / FA 1090).